A 284-amino-acid chain; its full sequence is Protein SIC1 (284 aa).

A disordered region spans residues 1-89; sequence MTPSTPPRSR…SPFPKSSVKR (89 aa). Phosphothreonine; by PHO85 is present on threonine 5. 2 stretches are compositionally biased toward polar residues: residues 18 to 52 and 61 to 79; these read PSGNTSSSALMQGQKTPQKPSQNLVPVTPSTTKSF and PNSNMGMTSPFNGLTSPQR. Threonine 33 bears the Phosphothreonine mark. Serine 76 is subject to Phosphoserine. Threonine 173 is modified (phosphothreonine). A phosphoserine mark is found at serine 198 and serine 201. Lysine derivative occurs at positions 268, 272, and 274.

In terms of assembly, interacts with HOG1. Phosphorylated by cyclin-dependent kinases CDC28 and PHO85 in association with G1-cyclins, promoting degradation of SIC1 and exit form G1. Post-translationally, may contain a covalently attached chromophore. In terms of processing, the N-terminus is blocked.

The protein resides in the cytoplasm. The protein localises to the nucleus. Substrate and inhibitor of the cyclin-dependent protein kinase CDC28. Its activity could be important for faithful segregation of chromosomes to daughter cells. It acts in response to a signal from a post-start checkpoint. This is Protein SIC1 (SIC1) from Saccharomyces cerevisiae (strain ATCC 204508 / S288c) (Baker's yeast).